A 202-amino-acid chain; its full sequence is Na(+)-translocating NADH-quinone reductase subunit E (202 aa).

6 helical membrane passes run 11–31, 41–61, 81–101, 114–134, 144–164, and 180–200; these read SIFMENMALAFFLGMCTFLAV, LGVAVIVVLGISVPVNQIIYF, FLGFITFIGVIAALVQILEMV, GIYLPLITVNCAILGGVLFMV, LVYGVGSGVGWMLAIVLLAGI, and LGITFTTAGLMAIAFMSFSGI.

Belongs to the NqrDE/RnfAE family. As to quaternary structure, composed of six subunits; NqrA, NqrB, NqrC, NqrD, NqrE and NqrF.

Its subcellular location is the cell inner membrane. It carries out the reaction a ubiquinone + n Na(+)(in) + NADH + H(+) = a ubiquinol + n Na(+)(out) + NAD(+). Its function is as follows. NQR complex catalyzes the reduction of ubiquinone-1 to ubiquinol by two successive reactions, coupled with the transport of Na(+) ions from the cytoplasm to the periplasm. NqrA to NqrE are probably involved in the second step, the conversion of ubisemiquinone to ubiquinol. The polypeptide is Na(+)-translocating NADH-quinone reductase subunit E (Psychromonas ingrahamii (strain DSM 17664 / CCUG 51855 / 37)).